The chain runs to 138 residues: MVMTVRVIAPDKTVWDAPAEEVILPSTTGQLGILSNHAPLLTALETGVMRVRQDREWVAIALMGGFAEVENNEVTILVNGAERGDTIDLEKAKAEFAAAQAALAQAEQGESKQAKIQATQAFRRARARLQAAGGVVEI.

Belongs to the ATPase epsilon chain family. F-type ATPases have 2 components, CF(1) - the catalytic core - and CF(0) - the membrane proton channel. CF(1) has five subunits: alpha(3), beta(3), gamma(1), delta(1), epsilon(1). CF(0) has four main subunits: a(1), b(1), b'(1) and c(9-12).

It is found in the cellular thylakoid membrane. Its function is as follows. Produces ATP from ADP in the presence of a proton gradient across the membrane. In terms of biological role, the complex from the organism is particularly stable to disruption and remains functional after 6 hours at 55 degrees Celsius. This chain is ATP synthase epsilon chain, found in Thermosynechococcus vestitus (strain NIES-2133 / IAM M-273 / BP-1).